A 153-amino-acid polypeptide reads, in one-letter code: Ribosome maturation factor RimP (153 aa).

This sequence belongs to the RimP family.

Its subcellular location is the cytoplasm. Required for maturation of 30S ribosomal subunits. In Chromohalobacter salexigens (strain ATCC BAA-138 / DSM 3043 / CIP 106854 / NCIMB 13768 / 1H11), this protein is Ribosome maturation factor RimP.